The primary structure comprises 215 residues: MSSLPALDIFLSDYQQAYLDTLGEHPRYYAQQQASECIVGDVDVETEEALQWKSVVRVDTGRFDNVEHALELSLHGDINAFYGSHFAASLMFDSQWGTGELLQAWSQSDFEHLQQNMIGHLMMKKKLKQEPTWFIGVFDDEDKMITVNNADGSVWIEIAGQAQSVKLADSLNSFISEVSPRVAPPVKLVEEVIPAYDHPGIWQRMKIMWRNLLGK.

This sequence belongs to the Syd family.

It localises to the cell inner membrane. Its function is as follows. Interacts with the SecY protein in vivo. May bind preferentially to an uncomplexed state of SecY, thus functioning either as a chelating agent for excess SecY in the cell or as a regulatory factor that negatively controls the translocase function. The protein is Protein Syd of Shewanella piezotolerans (strain WP3 / JCM 13877).